A 332-amino-acid chain; its full sequence is RNA polymerase principal sigma factor HrdD (332 aa).

A disordered region spans residues 1 to 25 (MATRAVARRQSATGETADSASSVRA). Residues 10 to 22 (QSATGETADSASS) are compositionally biased toward polar residues. Residues 124–137 (DLIQEGNAGLVRAV) carry the Polymerase core binding motif. Residues 294 to 313 (LTEVGKEHGLTRERIRQIEK) constitute a DNA-binding region (H-T-H motif).

Belongs to the sigma-70 factor family.

Functionally, sigma factors are initiation factors that promote the attachment of RNA polymerase to specific initiation sites and are then released. In Streptomyces viridifaciens, this protein is RNA polymerase principal sigma factor HrdD (hrdD).